A 140-amino-acid chain; its full sequence is ATP synthase epsilon chain 1 (140 aa).

It belongs to the ATPase epsilon chain family. F-type ATPases have 2 components, CF(1) - the catalytic core - and CF(0) - the membrane proton channel. CF(1) has five subunits: alpha(3), beta(3), gamma(1), delta(1), epsilon(1). CF(0) has three main subunits: a, b and c.

The protein resides in the cell inner membrane. Its function is as follows. Produces ATP from ADP in the presence of a proton gradient across the membrane. In Photobacterium profundum (strain SS9), this protein is ATP synthase epsilon chain 1.